The primary structure comprises 610 residues: METLLAGNPANGVAKPTCNGVGALPVANSHAIIATPAAAAATLAPAGATLGRHLARRLVQIGASDVFAVPGDFNLTLLDYLIAEPGLTLVGCCNELNAGYAADGYARSRGVGACAVTFTVGGLSVLNAIAGAYSENLPVVCIVGGPNSNDYGTNRILHHTIGLPDFSQELRCFQTITCYQAIINNLDDAHEQIDTAIATALRESKPVYISVSCNLAGLSHPTFSRDPVPMFISPRLSNKANLEYAVEAAADFLNKAVKPVMVGGPKIRVAKAREAFAAVADASGYPFAVMPAAKGLVPEHHPRFIGTYWGAVSTTFCAEIVESADAYLFAGPIFNDYSSVGYSLLLKREKAVIVQPDRMVVGDGPAFGCILMPEFLRALAKRLRRNTTAYDNYRRIFVPDREPPNGKPNEPLRVNVLFKHIKGMLSGDSAVVAETGDSWFNCQKLRLPEGCGYEFQMQYGSIGWSVGATLGYAQAAKDKRVIACIGDGSFQVTAQDVSTMLRCGQKSIIFLINNGGYTIEVEIHDGPYNVIKNWDYTGLVNAIHNSEGNCWTMKVRTEEQLKEAIATVTGAKKDCLCFIEVIVHKDDTSKELLEWGSRVSAANSRPPNPQ.

The substrate site is built by Asp72 and His159. The thiamine pyrophosphate binding stretch occupies residues 437-519 (DSWFNCQKLR…FLINNGGYTI (83 aa)). Positions 487, 514, and 516 each coordinate Mg(2+). Glu520 is a binding site for substrate.

This sequence belongs to the TPP enzyme family. Homotetramer. A metal cation is required as a cofactor. The cofactor is thiamine diphosphate.

It catalyses the reaction a 2-oxocarboxylate + H(+) = an aldehyde + CO2. This Zea mays (Maize) protein is Pyruvate decarboxylase 1 (PDC1).